The chain runs to 230 residues: PKHD-type hydroxylase Xfasm12_1709 (230 aa).

Positions 78–182 (RTLPPRFNRY…RIASFFWVQS (105 aa)) constitute a Fe2OG dioxygenase domain. Fe cation-binding residues include His-96, Asp-98, and His-163. Arg-173 provides a ligand contact to 2-oxoglutarate.

Fe(2+) serves as cofactor. L-ascorbate is required as a cofactor.

This chain is PKHD-type hydroxylase Xfasm12_1709, found in Xylella fastidiosa (strain M12).